The sequence spans 961 residues: DNA replication licensing factor MCM2 (961 aa).

A compositionally biased stretch (polar residues) spans 1-17 (MDDSENNAPSTPGSPGF). 2 disordered regions span residues 1-81 (MDDS…FNDN) and 120-220 (AEAE…EEDE). A compositionally biased stretch (acidic residues) spans 39–78 (SDDDDDDVVGAEEAEVDPNVLPEDDGVVAAEEEEDGEDLF). 2 stretches are compositionally biased toward basic and acidic residues: residues 120–146 (AEAELDARDVRTGAAPDRKLPRMLHDQ) and 166–176 (PPREPRTPRSD). Acidic residues predominate over residues 205-220 (QTDDDPYEDEFDEEDE). A C4-type zinc finger spans residues 380–406 (CSKCGTVLGPFFQNSYTEVKVGSCPEC). Positions 524-730 (IGERIVKSIA…FTDEMLARFV (207 aa)) constitute an MCM domain. Residue 574–581 (GDPGTAKS) coordinates ATP. The Arginine finger signature appears at 706 to 709 (SRFD).

The protein belongs to the MCM family. Component of the minichromosome maintenance (MCM) complex, a heterotetramer composed of MCM2, MCM3, MCM4, MCM5, MCM6 and MCM7.

It localises to the nucleus. The enzyme catalyses ATP + H2O = ADP + phosphate + H(+). Its function is as follows. Probable component of the MCM2-7 complex (MCM complex) that may function as a DNA helicase and which is essential to undergo a single round of replication initiation and elongation per cell cycle in eukaryotic cells. The sequence is that of DNA replication licensing factor MCM2 from Oryza sativa subsp. indica (Rice).